The following is a 389-amino-acid chain: Pregnancy-associated glycoprotein 1 (389 aa).

The first 15 residues, 1-15 (MKWLVILGLVALSEC), serve as a signal peptide directing secretion. The 311-residue stretch at 76–386 (YVGNITIGTP…DRGQNRIGLR (311 aa)) folds into the Peptidase A1 domain. Asn79 carries N-linked (GlcNAc...) asparagine glycosylation. Asp94 is an active-site residue. A disulfide bridge links Cys107 with Cys112. Asn130 is a glycosylation site (N-linked (GlcNAc...) asparagine). A disulfide bond links Cys268 and Cys272. Residue Asp277 is part of the active site. The cysteines at positions 311 and 345 are disulfide-linked. A glycan (N-linked (GlcNAc...) asparagine) is linked at Asn348.

This sequence belongs to the peptidase A1 family. As to expression, expressed throughout the chorion, with the signal localized exclusively over the trophectoderm.

The protein localises to the secreted. It is found in the extracellular space. Its function is as follows. Appears to be proteolytically inactive. This chain is Pregnancy-associated glycoprotein 1, found in Sus scrofa (Pig).